Here is a 490-residue protein sequence, read N- to C-terminus: Betaine aldehyde dehydrogenase (490 aa).

Asp93 is a K(+) binding site. NAD(+) is bound at residue 150–152; sequence GAW. The active-site Charge relay system is Lys162. Residue 176-179 coordinates NAD(+); the sequence is KPSE. Residue Val180 coordinates K(+). 230 to 233 lines the NAD(+) pocket; sequence GIAS. Position 246 (Leu246) interacts with K(+). Glu252 acts as the Proton acceptor in catalysis. Residues Gly254, Cys286, and Glu387 each coordinate NAD(+). The active-site Nucleophile is the Cys286. Cys286 is modified (cysteine sulfenic acid (-SOH)). Residues Lys457 and Gly460 each contribute to the K(+) site. Glu464 functions as the Charge relay system in the catalytic mechanism.

The protein belongs to the aldehyde dehydrogenase family. In terms of assembly, dimer of dimers. Requires K(+) as cofactor.

It catalyses the reaction betaine aldehyde + NAD(+) + H2O = glycine betaine + NADH + 2 H(+). It participates in amine and polyamine biosynthesis; betaine biosynthesis via choline pathway; betaine from betaine aldehyde: step 1/1. Its function is as follows. Involved in the biosynthesis of the osmoprotectant glycine betaine. Catalyzes the irreversible oxidation of betaine aldehyde to the corresponding acid. The sequence is that of Betaine aldehyde dehydrogenase from Yersinia pestis.